A 106-amino-acid polypeptide reads, in one-letter code: Antitoxin MazE3 (106 aa).

As to quaternary structure, forms a complex with cognate toxin MazF3, possibly with 1:1 stoichiometry.

Functionally, antitoxin component of a type II toxin-antitoxin (TA) system. Upon expression in E.coli and M.smegmatis neutralizes the effect of cognate toxin MazF3. Overexpression of MazE3 alone decreased persister cells formation in M.smegmatis upon challenge with gentamicin or kanamycin. This is Antitoxin MazE3 (mazE3) from Mycobacterium tuberculosis (strain ATCC 25618 / H37Rv).